Consider the following 405-residue polypeptide: Formate-dependent phosphoribosylglycinamide formyltransferase (405 aa).

Residues 27–28 (EL) and glutamate 87 each bind N(1)-(5-phospho-beta-D-ribosyl)glycinamide. Residues arginine 120, lysine 162, 167-172 (SSGKGQ), 202-205 (EGFI), and glutamate 210 each bind ATP. Residues 125 to 320 (RLAAETLGLP…EFELHARALL (196 aa)) form the ATP-grasp domain. Mg(2+)-binding residues include glutamate 279 and glutamate 291. N(1)-(5-phospho-beta-D-ribosyl)glycinamide-binding positions include aspartate 298, lysine 367, and 374-375 (RR).

It belongs to the PurK/PurT family. Homodimer.

It catalyses the reaction N(1)-(5-phospho-beta-D-ribosyl)glycinamide + formate + ATP = N(2)-formyl-N(1)-(5-phospho-beta-D-ribosyl)glycinamide + ADP + phosphate + H(+). The protein operates within purine metabolism; IMP biosynthesis via de novo pathway; N(2)-formyl-N(1)-(5-phospho-D-ribosyl)glycinamide from N(1)-(5-phospho-D-ribosyl)glycinamide (formate route): step 1/1. Its function is as follows. Involved in the de novo purine biosynthesis. Catalyzes the transfer of formate to 5-phospho-ribosyl-glycinamide (GAR), producing 5-phospho-ribosyl-N-formylglycinamide (FGAR). Formate is provided by PurU via hydrolysis of 10-formyl-tetrahydrofolate. The chain is Formate-dependent phosphoribosylglycinamide formyltransferase from Bordetella avium (strain 197N).